The following is a 559-amino-acid chain: Glucans biosynthesis protein G (559 aa).

A signal peptide spans 1–37 (MVSLLSCGTSASSHIVKKALTRLSLAMAAGLCFNLAA).

The protein belongs to the OpgD/OpgG family.

Its subcellular location is the periplasm. It functions in the pathway glycan metabolism; osmoregulated periplasmic glucan (OPG) biosynthesis. Functionally, involved in the biosynthesis of osmoregulated periplasmic glucans (OPGs). This is Glucans biosynthesis protein G from Shewanella frigidimarina (strain NCIMB 400).